The primary structure comprises 560 residues: 2-succinyl-5-enolpyruvyl-6-hydroxy-3-cyclohexene-1-carboxylate synthase (560 aa).

This sequence belongs to the TPP enzyme family. MenD subfamily. In terms of assembly, homodimer. The cofactor is Mg(2+). Mn(2+) serves as cofactor. Requires thiamine diphosphate as cofactor.

The enzyme catalyses isochorismate + 2-oxoglutarate + H(+) = 5-enolpyruvoyl-6-hydroxy-2-succinyl-cyclohex-3-ene-1-carboxylate + CO2. Its pathway is quinol/quinone metabolism; 1,4-dihydroxy-2-naphthoate biosynthesis; 1,4-dihydroxy-2-naphthoate from chorismate: step 2/7. The protein operates within quinol/quinone metabolism; menaquinone biosynthesis. Its function is as follows. Catalyzes the thiamine diphosphate-dependent decarboxylation of 2-oxoglutarate and the subsequent addition of the resulting succinic semialdehyde-thiamine pyrophosphate anion to isochorismate to yield 2-succinyl-5-enolpyruvyl-6-hydroxy-3-cyclohexene-1-carboxylate (SEPHCHC). This chain is 2-succinyl-5-enolpyruvyl-6-hydroxy-3-cyclohexene-1-carboxylate synthase, found in Pectobacterium carotovorum subsp. carotovorum (strain PC1).